The primary structure comprises 390 residues: GDSL esterase/lipase At1g28640 (390 aa).

An N-terminal signal peptide occupies residues 1–26 (MASSLEKLISSFLLVLYSTTIIVASS). Residue serine 42 is the Nucleophile of the active site. Residues asparagine 105, asparagine 138, and asparagine 321 are each glycosylated (N-linked (GlcNAc...) asparagine). Residues aspartate 346 and histidine 349 contribute to the active site. An N-linked (GlcNAc...) asparagine glycan is attached at asparagine 364.

The protein belongs to the 'GDSL' lipolytic enzyme family.

Its subcellular location is the secreted. This is GDSL esterase/lipase At1g28640 from Arabidopsis thaliana (Mouse-ear cress).